Here is a 115-residue protein sequence, read N- to C-terminus: Holo-[acyl-carrier-protein] synthase (115 aa).

Mg(2+)-binding residues include Asp-5 and Glu-51.

Belongs to the P-Pant transferase superfamily. AcpS family. Mg(2+) serves as cofactor.

It localises to the cytoplasm. It catalyses the reaction apo-[ACP] + CoA = holo-[ACP] + adenosine 3',5'-bisphosphate + H(+). In terms of biological role, transfers the 4'-phosphopantetheine moiety from coenzyme A to a Ser of acyl-carrier-protein. This chain is Holo-[acyl-carrier-protein] synthase, found in Helicobacter acinonychis (strain Sheeba).